The chain runs to 354 residues: Uroporphyrinogen decarboxylase (354 aa).

Substrate contacts are provided by residues 28–32 (RQAGR), Asp-78, Tyr-155, Ser-210, and His-325.

It belongs to the uroporphyrinogen decarboxylase family. Homodimer.

Its subcellular location is the cytoplasm. It carries out the reaction uroporphyrinogen III + 4 H(+) = coproporphyrinogen III + 4 CO2. It functions in the pathway porphyrin-containing compound metabolism; protoporphyrin-IX biosynthesis; coproporphyrinogen-III from 5-aminolevulinate: step 4/4. In terms of biological role, catalyzes the decarboxylation of four acetate groups of uroporphyrinogen-III to yield coproporphyrinogen-III. The polypeptide is Uroporphyrinogen decarboxylase (Crocosphaera subtropica (strain ATCC 51142 / BH68) (Cyanothece sp. (strain ATCC 51142))).